The chain runs to 149 residues: Small ribosomal subunit protein bS6 (149 aa).

Residues 94–149 (EKHEEGPSAMMQKRDRDDRPRRDGDRPDRGGFGDRGPRPDRGDRDDRPRRPREDRA) form a disordered region.

The protein belongs to the bacterial ribosomal protein bS6 family.

Its function is as follows. Binds together with bS18 to 16S ribosomal RNA. The sequence is that of Small ribosomal subunit protein bS6 from Sinorhizobium fredii (strain NBRC 101917 / NGR234).